A 116-amino-acid chain; its full sequence is Protein Rev (116 aa).

A phosphoserine; by host CK2 mark is found at Ser5 and Ser8. A homomultimerization region spans residues 18–26 (LIKFLYQSN). The disordered stretch occupies residues 23-49 (YQSNPPPNPEGTRQARRNRRRRWRERQ). Residues 34 to 50 (TRQARRNRRRRWRERQR) carry the Nuclear localization signal and RNA-binding (RRE) motif. The span at 36-47 (QARRNRRRRWRE) shows a compositional bias: basic residues. A Nuclear export signal and binding to XPO1 motif is present at residues 73 to 84 (LQLPPLERLTLD). Ser92 and Ser99 each carry phosphoserine; by host.

This sequence belongs to the HIV-1 REV protein family. Homomultimer; when bound to the RRE. Multimeric assembly is essential for activity and may involve XPO1. Binds to human KPNB1, XPO1, TNPO1, RANBP5 and IPO7. Interacts with the viral Integrase. Interacts with human KHDRBS1. Interacts with human NAP1; this interaction decreases Rev multimerization and stimulates its activity. Interacts with human DEAD-box helicases DDX3 and DDX24; these interactions may serve for viral RNA export to the cytoplasm and packaging, respectively. Interacts with human PSIP1; this interaction may inhibit HIV-1 DNA integration by promoting dissociation of the Integrase-LEDGF/p75 complex. In terms of processing, asymmetrically arginine dimethylated at one site by host PRMT6. Methylation impairs the RNA-binding activity and export of viral RNA from the nucleus to the cytoplasm. Phosphorylated by protein kinase CK2. Presence of, and maybe binding to the N-terminus of the regulatory beta subunit of CK2 is necessary for CK2-mediated Rev's phosphorylation.

The protein resides in the host nucleus. Its subcellular location is the host nucleolus. It is found in the host cytoplasm. Escorts unspliced or incompletely spliced viral pre-mRNAs (late transcripts) out of the nucleus of infected cells. These pre-mRNAs carry a recognition sequence called Rev responsive element (RRE) located in the env gene, that is not present in fully spliced viral mRNAs (early transcripts). This function is essential since most viral proteins are translated from unspliced or partially spliced pre-mRNAs which cannot exit the nucleus by the pathway used by fully processed cellular mRNAs. Rev itself is translated from a fully spliced mRNA that readily exits the nucleus. Rev's nuclear localization signal (NLS) binds directly to KPNB1/Importin beta-1 without previous binding to KPNA1/Importin alpha-1. KPNB1 binds to the GDP bound form of RAN (Ran-GDP) and targets Rev to the nucleus. In the nucleus, the conversion from Ran-GDP to Ran-GTP dissociates Rev from KPNB1 and allows Rev's binding to the RRE in viral pre-mRNAs. Rev multimerization on the RRE via cooperative assembly exposes its nuclear export signal (NES) to the surface. Rev can then form a complex with XPO1/CRM1 and Ran-GTP, leading to nuclear export of the complex. Conversion from Ran-GTP to Ran-GDP mediates dissociation of the Rev/RRE/XPO1/RAN complex, so that Rev can return to the nucleus for a subsequent round of export. Beside KPNB1, also seems to interact with TNPO1/Transportin-1, RANBP5/IPO5 and IPO7/RANBP7 for nuclear import. The nucleoporin-like HRB/RIP is an essential cofactor that probably indirectly interacts with Rev to release HIV RNAs from the perinuclear region to the cytoplasm. The sequence is that of Protein Rev from Human immunodeficiency virus type 1 group M subtype B (isolate PCV12) (HIV-1).